A 117-amino-acid chain; its full sequence is Immunoglobulin lambda variable 7-43 (117 aa).

An N-terminal signal peptide occupies residues 1-19; sequence MAWTPLFLFLLTCCPGSNS. The framework-1 stretch occupies residues 20–44; sequence QTVVTQEPSLTVSPGGTVTLTCASS. The Ig-like domain occupies 20–117; the sequence is QTVVTQEPSL…YCLLYYGGAQ (98 aa). Residues cysteine 41 and cysteine 109 are joined by a disulfide bond. The complementarity-determining-1 stretch occupies residues 45 to 53; the sequence is TGAVTSGYY. The segment at 54-70 is framework-2; that stretch reads PNWFQQKPGQAPRALIY. The segment at 71 to 73 is complementarity-determining-2; that stretch reads STS. The segment at 74-109 is framework-3; the sequence is NKHSWTPARFSGSLLGGKAALTLSGVQPEDEAEYYC. The complementarity-determining-3 stretch occupies residues 110 to 117; that stretch reads LLYYGGAQ.

In terms of assembly, immunoglobulins are composed of two identical heavy chains and two identical light chains; disulfide-linked.

Its subcellular location is the secreted. The protein resides in the cell membrane. Functionally, v region of the variable domain of immunoglobulin light chains that participates in the antigen recognition. Immunoglobulins, also known as antibodies, are membrane-bound or secreted glycoproteins produced by B lymphocytes. In the recognition phase of humoral immunity, the membrane-bound immunoglobulins serve as receptors which, upon binding of a specific antigen, trigger the clonal expansion and differentiation of B lymphocytes into immunoglobulins-secreting plasma cells. Secreted immunoglobulins mediate the effector phase of humoral immunity, which results in the elimination of bound antigens. The antigen binding site is formed by the variable domain of one heavy chain, together with that of its associated light chain. Thus, each immunoglobulin has two antigen binding sites with remarkable affinity for a particular antigen. The variable domains are assembled by a process called V-(D)-J rearrangement and can then be subjected to somatic hypermutations which, after exposure to antigen and selection, allow affinity maturation for a particular antigen. The chain is Immunoglobulin lambda variable 7-43 from Homo sapiens (Human).